Reading from the N-terminus, the 187-residue chain is Anterior gradient protein 1 (187 aa).

Residues 1–20 (MQTGLSLVCLVLLCSALGEA) form the signal peptide.

This sequence belongs to the AGR family.

The protein localises to the secreted. Its function is as follows. Probably involved in cement gland formation. In Xenopus tropicalis (Western clawed frog), this protein is Anterior gradient protein 1 (ag1).